The sequence spans 704 residues: Myb-related protein B (704 aa).

3 HTH myb-type domains span residues arginine 26–leucine 77, asparagine 78–valine 133, and lysine 134–valine 184. Residues tryptophan 54–leucine 77 constitute a DNA-binding region (H-T-H motif). A Glycyl lysine isopeptide (Lys-Gly) (interchain with G-Cter in SUMO2) cross-link involves residue lysine 104. 2 consecutive DNA-binding regions (H-T-H motif) follow at residues tryptophan 106–leucine 129 and tryptophan 157–isoleucine 180. A Glycyl lysine isopeptide (Lys-Gly) (interchain with G-Cter in SUMO2) cross-link involves residue lysine 197. Phosphothreonine is present on threonine 267. Lysine 275 is covalently cross-linked (Glycyl lysine isopeptide (Lys-Gly) (interchain with G-Cter in SUMO2)). Phosphoserine is present on serine 282. The tract at residues leucine 325–valine 412 is disordered. The span at serine 339–threonine 366 shows a compositional bias: low complexity. At serine 396 the chain carries Phosphoserine. Residue lysine 414 forms a Glycyl lysine isopeptide (Lys-Gly) (interchain with G-Cter in SUMO2) linkage. Phosphothreonine; by CDK2 occurs at positions 443 and 447. Residues lysine 450 and lysine 485 each participate in a glycyl lysine isopeptide (Lys-Gly) (interchain with G-Cter in SUMO2) cross-link. Residues threonine 490 and threonine 497 each carry the phosphothreonine; by CDK2 modification. Glycyl lysine isopeptide (Lys-Gly) (interchain with G-Cter in SUMO2) cross-links involve residues lysine 502 and lysine 513. Threonine 524 bears the Phosphothreonine; by CDK2 mark. Glycyl lysine isopeptide (Lys-Gly) (interchain with G-Cter in SUMO2) cross-links involve residues lysine 527, lysine 537, and lysine 550. At serine 581 the chain carries Phosphoserine; by CDK2. Residues lysine 588 and lysine 600 each participate in a glycyl lysine isopeptide (Lys-Gly) (interchain with G-Cter in SUMO2) cross-link. The tract at residues serine 603 to proline 626 is disordered. Residues proline 607–serine 620 show a composition bias toward low complexity. Residues lysine 629, lysine 643, and lysine 652 each participate in a glycyl lysine isopeptide (Lys-Gly) (interchain with G-Cter in SUMO2) cross-link.

Component of the DREAM complex (also named LINC complex) at least composed of E2F4, E2F5, LIN9, LIN37, LIN52, LIN54, MYBL1, MYBL2, RBL1, RBL2, RBBP4, TFDP1 and TFDP2. The complex exists in quiescent cells where it represses cell cycle-dependent genes. It dissociates in S phase when LIN9, LIN37, LIN52 and LIN54 form a subcomplex that binds to MYBL2. Interacts with CCNF (via the Cyclin N-terminal domain). Post-translationally, phosphorylated by cyclin A/CDK2 during S-phase. Phosphorylation at Thr-524 is probably involved in transcriptional activity.

The protein resides in the nucleus. Transcription factor involved in the regulation of cell survival, proliferation, and differentiation. Transactivates the expression of the CLU gene. This is Myb-related protein B (Mybl2) from Mus musculus (Mouse).